The following is a 264-amino-acid chain: MSNVRSDKPFVLAGRTFESRLLVGTGKYIDMEQTRLAIEASGAEIVTVAVRRTNLGQNPGEPNLLDVLPPDRYTILPNTAGCFDATEAVRTCRLSRELLDGRNLVKLEVLADQKTLFPNVIETLKAAEILVKDGFDVMVYTSDDPIIARQLAEIGCIAIMPLAGLIGSGLGICNPYNLQIILEETKVPVLVDAGVGTASDATIAMELGCEAVLMNSAIAHAQQPVMMAEAMKHAVIAGRLAYLAGRMPRKLYASASSPLDGLIK.

The active-site Schiff-base intermediate with DXP is Lys-106. 1-deoxy-D-xylulose 5-phosphate contacts are provided by residues Gly-167, Ala-193–Gly-194, and Asn-215–Ser-216.

It belongs to the ThiG family. Homotetramer. Forms heterodimers with either ThiH or ThiS.

The protein resides in the cytoplasm. It catalyses the reaction [ThiS sulfur-carrier protein]-C-terminal-Gly-aminoethanethioate + 2-iminoacetate + 1-deoxy-D-xylulose 5-phosphate = [ThiS sulfur-carrier protein]-C-terminal Gly-Gly + 2-[(2R,5Z)-2-carboxy-4-methylthiazol-5(2H)-ylidene]ethyl phosphate + 2 H2O + H(+). The protein operates within cofactor biosynthesis; thiamine diphosphate biosynthesis. In terms of biological role, catalyzes the rearrangement of 1-deoxy-D-xylulose 5-phosphate (DXP) to produce the thiazole phosphate moiety of thiamine. Sulfur is provided by the thiocarboxylate moiety of the carrier protein ThiS. In vitro, sulfur can be provided by H(2)S. This chain is Thiazole synthase, found in Pseudomonas savastanoi pv. phaseolicola (strain 1448A / Race 6) (Pseudomonas syringae pv. phaseolicola (strain 1448A / Race 6)).